The following is a 147-amino-acid chain: Hemoglobin subunit beta (147 aa).

The region spanning 3 to 147 (EWTDFERATI…VVSSLGRQYH (145 aa)) is the Globin domain. Heme b-binding residues include histidine 64 and histidine 93.

This sequence belongs to the globin family. As to quaternary structure, hb 1 is a heterotetramer of two alpha-1 and two beta chains. Hb 2 is a heterotetramer of two alpha-2 and two beta chains. As to expression, red blood cells.

Functionally, involved in oxygen transport from gills to the various peripheral tissues. The protein is Hemoglobin subunit beta (hbb) of Cottoperca gobio (Frogmouth).